The following is a 205-amino-acid chain: Holliday junction branch migration complex subunit RuvA (205 aa).

A domain I region spans residues 1–64; sequence MIGRLRGVLI…EDAQLLYGFI (64 aa). The segment at 65-143 is domain II; that stretch reads TKQERSLFRL…SLMEASVGSE (79 aa). The tract at residues 144 to 156 is flexible linker; it reads REFVLQSNYSPAP. The tract at residues 157–205 is domain III; sequence TVNSAEEDAISALISLGYKPPQASKAVSAAYKEGMDSETLIKAALKSML.

Belongs to the RuvA family. As to quaternary structure, homotetramer. Forms an RuvA(8)-RuvB(12)-Holliday junction (HJ) complex. HJ DNA is sandwiched between 2 RuvA tetramers; dsDNA enters through RuvA and exits via RuvB. An RuvB hexamer assembles on each DNA strand where it exits the tetramer. Each RuvB hexamer is contacted by two RuvA subunits (via domain III) on 2 adjacent RuvB subunits; this complex drives branch migration. In the full resolvosome a probable DNA-RuvA(4)-RuvB(12)-RuvC(2) complex forms which resolves the HJ.

It localises to the cytoplasm. Its function is as follows. The RuvA-RuvB-RuvC complex processes Holliday junction (HJ) DNA during genetic recombination and DNA repair, while the RuvA-RuvB complex plays an important role in the rescue of blocked DNA replication forks via replication fork reversal (RFR). RuvA specifically binds to HJ cruciform DNA, conferring on it an open structure. The RuvB hexamer acts as an ATP-dependent pump, pulling dsDNA into and through the RuvAB complex. HJ branch migration allows RuvC to scan DNA until it finds its consensus sequence, where it cleaves and resolves the cruciform DNA. The chain is Holliday junction branch migration complex subunit RuvA from Shewanella sp. (strain MR-7).